The primary structure comprises 716 residues: Leucine-rich repeat neuronal protein 1 (716 aa).

Residues 1–25 (MARMSFVLAAYQMVLSLLMTSLTGS) form the signal peptide. The region spanning 26–72 (SLQSSECPQLCVCEIRPWFTPQSTYREATTVDCNDLRLTRIPSNLSS) is the LRRNT domain. Residues 26–631 (SLQSSECPQL…DISDQETSTA (606 aa)) lie on the Extracellular side of the membrane. N-linked (GlcNAc...) asparagine glycosylation occurs at N69. LRR repeat units follow at residues 73–95 (DTQVLLLQSNNIAKTVDELQQLF), 96–117 (NLTELDFSQNNFTNIKEVGLAN), 120–141 (QLTTLHLEENQITEMNDYCLQD), 144–165 (NLQELYINHNQISTISANAFSG), 168–189 (NLLRLHLNSNKLKVIDSRWFDS), 192–213 (NLEILMIGENPVIGILDMNFKP), 216–237 (NLRSLVLAGMYLTDIPGNALVG), 240–261 (SLESLSFYDNKLVKVPQLALQK), and 264–285 (NLKFLDLNKNPIHKIQEGDFKN). Residues N96, N106, and N117 are each glycosylated (N-linked (GlcNAc...) asparagine). Positions 371 to 424 (NPLRCDCVIHWINSNKTNIRFMEPLSMFCAMPPEYRGQQVKEVLIQDSSEQCLP) constitute an LRRCT domain. N385 is a glycosylation site (N-linked (GlcNAc...) asparagine). An Ig-like C2-type domain is found at 424–515 (PMISHDTFPN…GADTRVVMIK (92 aa)). A disulfide bridge connects residues C447 and C499. 3 N-linked (GlcNAc...) asparagine glycosylation sites follow: N517, N582, and N611. The region spanning 525–617 (QVLKIYVKQT…SCVNVTTKNA (93 aa)) is the Fibronectin type-III domain. A helical transmembrane segment spans residues 632–652 (LAAVMGSMFAVISLASIAVYI). Over 653–716 (AKRFKRKNYH…VDTSRSYYMW (64 aa)) the chain is Cytoplasmic. Over residues 691 to 700 (DSEKDKDGTA) the composition is skewed to basic and acidic residues. The disordered stretch occupies residues 691–716 (DSEKDKDGTADTKPTQVDTSRSYYMW). The segment covering 702–716 (TKPTQVDTSRSYYMW) has biased composition (polar residues).

It localises to the membrane. The sequence is that of Leucine-rich repeat neuronal protein 1 (LRRN1) from Bos taurus (Bovine).